The sequence spans 84 residues: CDC42 small effector protein 2 (84 aa).

S-palmitoyl cysteine attachment occurs at residues Cys10 and Cys11. Residues Ile29–Gly42 enclose the CRIB domain. Phosphoserine is present on residues Ser43 and Ser52.

This sequence belongs to the CDC42SE/SPEC family. Interacts with CDC42 (in GTP-bound form). Interacts weakly with RAC1 and not at all with RHOA.

It localises to the cytoplasm. The protein localises to the cytoskeleton. The protein resides in the cell membrane. Its subcellular location is the cell projection. It is found in the phagocytic cup. In terms of biological role, probably involved in the organization of the actin cytoskeleton by acting downstream of CDC42, inducing actin filament assembly. Alters CDC42-induced cell shape changes. In activated T-cells, may play a role in CDC42-mediated F-actin accumulation at the immunological synapse. May play a role in early contractile events in phagocytosis in macrophages. This is CDC42 small effector protein 2 (CDC42SE2) from Pongo abelii (Sumatran orangutan).